A 421-amino-acid chain; its full sequence is Testin (421 aa).

The 108-residue stretch at 92 to 199 (MILTNPVAAK…GDVKLPREMD (108 aa)) folds into the PET domain. The interval 133–164 (EKQPVAGSEGAQYRKKQLAKQLPAHDQDPSKC) is disordered. Positions 155–164 (PAHDQDPSKC) are enriched in basic and acidic residues. 3 consecutive LIM zinc-binding domains span residues 234–297 (YSCY…CDSE), 299–359 (PRCA…NHAV), and 362–421 (QGCH…KMMS).

Belongs to the prickle / espinas / testin family. Interacts via LIM domain 1 with ZYX. Interacts (via LIM domain 3) with ENAH and VASP. Interacts with ALKBH4, talin, actin, alpha-actinin, GRIP1 and PXN. Interacts (via LIM domain 2) with ACTL7A (via N-terminus). Heterodimer with ACTL7A; the heterodimer interacts with ENAH to form a heterotrimer.

The protein resides in the cytoplasm. It is found in the cell junction. Its subcellular location is the focal adhesion. In terms of biological role, scaffold protein that may play a role in cell adhesion, cell spreading and in the reorganization of the actin cytoskeleton. Plays a role in the regulation of cell proliferation. May act as a tumor suppressor. The protein is Testin (TES) of Equus caballus (Horse).